A 942-amino-acid polypeptide reads, in one-letter code: DNA mismatch repair protein MutS (942 aa).

Residue 613-620 participates in ATP binding; that stretch reads GPNMAGKS.

This sequence belongs to the DNA mismatch repair MutS family.

Functionally, this protein is involved in the repair of mismatches in DNA. It is possible that it carries out the mismatch recognition step. This protein has a weak ATPase activity. The chain is DNA mismatch repair protein MutS from Clostridium botulinum (strain Eklund 17B / Type B).